Here is a 510-residue protein sequence, read N- to C-terminus: MKLAYWMYAGPAHIGTLRVASSFKNVHAIMHAPLGDDYFNVMRSMLERERDFTPVTASIVDRHVLARGSQEKVIDNITRKDKEQRPDLIVLTPTCTSSILQEDLQNFVARASISSDSDVILADVNHYRVNELQAADRTLEQIVRYFLNKARRQGVLTRSLTDTPSANIIGIFTLGFHNQHDCRELKRLLQDLGIKVNQVIPEGGSVEHLQDLPKAWFNIVPYREVGLMTAKYLEREFGMPYLSTTPMGIVDTAEFIRQMEKYVNSFLSKEKVNYESYINYQTQFVSQAAWFSRSIDCQNLTGKKVVVFGDATHAASITKILVREMGIHVGCAGTYCKHDAEWFNEQVQGFCDEALITEDHTEVADTIARIEPSAIFGTQMERHIGKRLEIPCGVISSPVHIQNFPLGYRPFLGYEGTNQIADSVYNSFTLGMEDHLLDIFGGHDTKEVITKSLSTETDLTWNPESQRELNKIPGFVRGKIKRNTEKFARQEGITTITVDVMYAAKEALST.

A [4Fe-4S] cluster-binding site is contributed by Asp36. Asp296 acts as the Proton donor in catalysis. 431–432 (GM) is a substrate binding site.

It belongs to the ChlB/BchB/BchZ family. In terms of assembly, protochlorophyllide reductase is composed of three subunits; ChlL, ChlN and ChlB. Forms a heterotetramer of two ChlB and two ChlN subunits. It depends on [4Fe-4S] cluster as a cofactor.

The protein localises to the plastid. The protein resides in the chloroplast. It carries out the reaction chlorophyllide a + oxidized 2[4Fe-4S]-[ferredoxin] + 2 ADP + 2 phosphate = protochlorophyllide a + reduced 2[4Fe-4S]-[ferredoxin] + 2 ATP + 2 H2O. Its pathway is porphyrin-containing compound metabolism; chlorophyll biosynthesis (light-independent). Component of the dark-operative protochlorophyllide reductase (DPOR) that uses Mg-ATP and reduced ferredoxin to reduce ring D of protochlorophyllide (Pchlide) to form chlorophyllide a (Chlide). This reaction is light-independent. The NB-protein (ChlN-ChlB) is the catalytic component of the complex. The protein is Light-independent protochlorophyllide reductase subunit B of Angiopteris evecta (Mule's foot fern).